The primary structure comprises 458 residues: RuvB-like helicase 1 (458 aa).

Over residues 1-18 (MVQITEVKENQSSRESRT) the composition is skewed to basic and acidic residues. The disordered stretch occupies residues 1–20 (MVQITEVKENQSSRESRTAA). Residue 73–80 (GPPATGKT) participates in ATP binding.

This sequence belongs to the RuvB family. May form heterododecamers with RVB2. Component of the SWR1 chromatin remodeling complex, the INO80 chromatin remodeling complex, and of the R2TP complex.

It localises to the nucleus. The catalysed reaction is ATP + H2O = ADP + phosphate + H(+). Functionally, DNA helicase which participates in several chromatin remodeling complexes, including the SWR1 and the INO80 complexes. The SWR1 complex mediates the ATP-dependent exchange of histone H2A for the H2A variant HZT1 leading to transcriptional regulation of selected genes by chromatin remodeling. The INO80 complex remodels chromatin by shifting nucleosomes and is involved in DNA repair. Also involved in pre-rRNA processing. This is RuvB-like helicase 1 (RVB1) from Candida albicans (strain SC5314 / ATCC MYA-2876) (Yeast).